A 137-amino-acid chain; its full sequence is Probable calcium-binding protein CML33 (137 aa).

EF-hand domains follow at residues 1–36, 37–72, 76–111, and 112–137; these read MNNMSLSDIFERFDTSKDGKISWEEFRDAIHALSPS, IPSEKLVEMFIQLDTNGDGQVDAAKFASCMDQTAQS, DVEKELKDAFKLYDINCDGKISANELHVVMTRLGEK, and CTVESCVGMVQAIDVDGDGYIRFVGV. 5 residues coordinate Ca(2+): D14, S16, D18, K20, and E25. Residues D89, N91, D93, K95, and E100 each contribute to the Ca(2+) site.

Functionally, potential calcium sensor. This chain is Probable calcium-binding protein CML33 (CML33), found in Arabidopsis thaliana (Mouse-ear cress).